We begin with the raw amino-acid sequence, 1026 residues long: Multidrug resistance protein MdtC (1026 aa).

11 helical membrane passes run 15 to 35 (ILIA…LPVA), 333 to 353 (EVEE…FLFL), 360 to 380 (LIPA…MYLC), 387 to 407 (LSLM…IVVL), 431 to 451 (VGFT…PLLL), 463 to 483 (FAVT…TLTP), 528 to 548 (LVGV…IAIP), 853 to 873 (LILI…LYES), 897 to 917 (LFNA…IGIV), 953 to 973 (PIMM…LSGG), and 984 to 1004 (ITIV…TPVV).

This sequence belongs to the resistance-nodulation-cell division (RND) (TC 2.A.6) family. MdtC subfamily. In terms of assembly, part of a tripartite efflux system composed of MdtA, MdtB and MdtC. MdtC forms a heteromultimer with MdtB.

It localises to the cell inner membrane. In Salmonella arizonae (strain ATCC BAA-731 / CDC346-86 / RSK2980), this protein is Multidrug resistance protein MdtC.